A 742-amino-acid chain; its full sequence is Two pore calcium channel protein 1 (742 aa).

A disordered region spans residues 1–37 (MSEAEAPLITEEAAERGLASSGSRRLSDGAGGQGSRK). Residues 1–82 (MSEAEAPLIT…NDTRFGRAMS (82 aa)) lie on the Cytoplasmic side of the membrane. Residues 83 to 103 (FYFVYLRLDWLWSLNLFALIL) traverse the membrane as a helical segment. The Extracellular portion of the chain corresponds to 104–140 (LNFLEKPLWCRKDALQAYDQRDLYFLGQLPYFSKTES). The chain crosses the membrane as a helical span at residues 141–161 (LIYEGLTLVILVMDIFCPLSY). Topologically, residues 162–176 (EGLNIFWRSTTNKLK) are cytoplasmic. The chain crosses the membrane as a helical span at residues 177–197 (IVLLFILACDILVFAFSSQPF). The Extracellular portion of the chain corresponds to 198–204 (RLAPYIR). The chain crosses the membrane as a helical; Voltage-sensor span at residues 205–226 (VVFLIMTIRELRMCAITLAGLI). Residues 227–247 (GTYLNVLALSLLFLLFASWLA) traverse the membrane as a helical segment. Residues 248 to 258 (YVTFEDTPQGK) are Extracellular-facing. An intramembrane region (pore-forming) is located at residues 259–273 (TIFSSYGVTLYQMFV). The Extracellular portion of the chain corresponds to 274–296 (LFTTSNNPDVWVHAYKIPRWYSL). Residues 297–317 (FFIVYVLLGVYFLTNLILAVI) form a helical membrane-spanning segment. At 318–446 (YDSFKEQFAK…SFVRSRMFEY (129 aa)) the chain is on the cytoplasmic side. EF-hand domains follow at residues 335-370 (IRKN…LNKY) and 376-411 (TSRE…IAIK). A helical transmembrane segment spans residues 447 to 467 (IIVFVLLINLVAVIIETTLDI). Residues 468–480 (ENSSSQETWQEVE) are Extracellular-facing. Asparagine 469 carries N-linked (GlcNAc...) asparagine glycosylation. The helical transmembrane segment at 481–501 (FFLGWIYVAEMALKIFSLGFG) threads the bilayer. Residues 502–510 (AYWMEGQNK) are Cytoplasmic-facing. The chain crosses the membrane as a helical span at residues 511 to 531 (FDFVLTWTIFIGETLTFAFPS). At 532 to 540 (KLPFLSNGE) the chain is on the extracellular side. Residues 541 to 558 (WIRYLLLGRVLRLTRILL) form a helical; Voltage-sensor membrane-spanning segment. Residues 559 to 582 (QVQRFRAFVATFFTLMSSLMPYLG) lie on the Cytoplasmic side of the membrane. Residues 583–603 (IVFCVLCMYCSIGLQIFGGIV) traverse the membrane as a helical segment. Residues 604 to 627 (YAGNPTLEETDLFNNDYLLFNFND) lie on the Extracellular side of the membrane. Residues 628–642 (YPSGMVTLFNLLVMG) constitute an intramembrane region (pore-forming). Residues 643–663 (NWQVWMESYWQLTGTSWSLIY) are Extracellular-facing. The helical transmembrane segment at 664 to 684 (FVSFYLISILLLLNLIVAFVL) threads the bilayer. The Cytoplasmic segment spans residues 685–742 (EAFFAEMELEKGEEVDIQNPTSGGIKKRRSMRVRSKGTMVDILLHHMLSNELDGSQNS).

Belongs to the calcium channel alpha-1 subunit (TC 1.A.1.11) family. Two pore calcium channel subfamily. Homodimer.

Its subcellular location is the membrane. Inhibited by Al(3+). Functions as a voltage-gated inward-rectifying Ca(2+) channel (VDCC) across the plasma membrane that mediates sucrose-induced Ca(2+) influx in autotrophically grown leaf cells. Acts as the major ROS-responsive Ca(2+) channel and is the possible target of Al-dependent inhibition. Plays a regulatory role in defense responses. In Triticum aestivum (Wheat), this protein is Two pore calcium channel protein 1 (TPC1).